The chain runs to 211 residues: UPF0056 membrane protein BUsg_257 (211 aa).

The next 6 membrane-spanning stretches (helical) occupy residues 14–34 (FFVS…FTTM), 54–74 (AFII…AFGI), 76–96 (INSF…SMIS), 116–136 (VVPL…TIVW), 144–164 (SDFL…WLCF), and 185–205 (IMGL…IKSI).

This sequence belongs to the UPF0056 (MarC) family.

It localises to the cell membrane. The sequence is that of UPF0056 membrane protein BUsg_257 from Buchnera aphidicola subsp. Schizaphis graminum (strain Sg).